The sequence spans 298 residues: MHNHNKIANKELVVNWHITEACNYRCGYCFAKWGKQKGELIQDVASISQLMDAISGLPAVLNQMHAANFEGVRLNLVGGETFLNYRKIKEVVKQAKKRGLKLSAITNGSRINNDFINLIANNFASIGFSVDSVDNSTNLNIGRVEKNAVMNPEKIIHTIASIRAINPKIEIKVNTVVSDLNKSEDLSDFIGQVMPNKWKIFKVLPVVANHHLISEEQFTRFLRRHQRFGEIIYAEDNTEMVDSYIMIDPIGRFFQNSDFNNGYYYSRPILQVGIHQAFNEINFNANKFYSRYKRASLN.

Residues 8–235 form the Radical SAM core domain; that stretch reads ANKELVVNWH…QRFGEIIYAE (228 aa). 3 residues coordinate [4Fe-4S] cluster: Cys22, Cys26, and Cys29.

It belongs to the radical SAM superfamily. Viperin family. [4Fe-4S] cluster is required as a cofactor.

It catalyses the reaction CTP + AH2 + S-adenosyl-L-methionine = 3'-deoxy-3',4'-didehydro-CTP + 5'-deoxyadenosine + L-methionine + A + H2O + H(+). The catalysed reaction is UTP + AH2 + S-adenosyl-L-methionine = 3'-deoxy-3',4'-didehydro-UTP + 5'-deoxyadenosine + L-methionine + A + H2O + H(+). Its function is as follows. Expression of pVip8 in E.coli (strain MG1655) confers resistance to phages lambda, P1, SECphi8 and T7. Prevents culture collapse upon infection with T7. Catalyzes the conversion of cytidine triphosphate (CTP) to 3'-deoxy-3',4'-didehydro-CTP (ddhCTP) and uridine triphosphate (UTP) to 3'-deoxy-3',4'-didehydro-UTP (ddhUTP), probably via a SAM-dependent radical mechanism. The modified nucleotides repress transcription from T7 RNA polymerase-directed genes (possibly by acting as chain terminators), strongly suggesting these nucleotides block viral polymerase transcription. This is S-adenosylmethionine-dependent nucleotide dehydratase from Psychrobacter lutiphocae (strain DSM 21542 / CCUG 56590 / IMMIB L-1110).